The primary structure comprises 184 residues: MKNLTDSFVYLGHWPSAGSFGFNTDILATNPINLSVVFGVLIFFGKGVLNDLLDNRKQRILNTIRNSEELREAAIQQLENARARLRKVETEADQFRVNGYSEIEREKLNLINSTYKTLKQLENYKNETILFEQQRTINQVRERVFQQALQGAIGTLNSCLSNELHLRTINANIGMFGTMKEITD.

Residues 27 to 49 form a helical membrane-spanning segment; the sequence is LATNPINLSVVFGVLIFFGKGVL.

This sequence belongs to the ATPase B chain family. As to quaternary structure, F-type ATPases have 2 components, F(1) - the catalytic core - and F(0) - the membrane proton channel. F(1) has five subunits: alpha(3), beta(3), gamma(1), delta(1), epsilon(1). F(0) has four main subunits: a(1), b(1), b'(1) and c(10-14). The alpha and beta chains form an alternating ring which encloses part of the gamma chain. F(1) is attached to F(0) by a central stalk formed by the gamma and epsilon chains, while a peripheral stalk is formed by the delta, b and b' chains.

The protein resides in the plastid. It is found in the chloroplast thylakoid membrane. In terms of biological role, f(1)F(0) ATP synthase produces ATP from ADP in the presence of a proton or sodium gradient. F-type ATPases consist of two structural domains, F(1) containing the extramembraneous catalytic core and F(0) containing the membrane proton channel, linked together by a central stalk and a peripheral stalk. During catalysis, ATP synthesis in the catalytic domain of F(1) is coupled via a rotary mechanism of the central stalk subunits to proton translocation. Functionally, component of the F(0) channel, it forms part of the peripheral stalk, linking F(1) to F(0). The chain is ATP synthase subunit b, chloroplastic from Crucihimalaya wallichii (Rock-cress).